A 435-amino-acid chain; its full sequence is Proline--tRNA ligase (435 aa).

This sequence belongs to the class-II aminoacyl-tRNA synthetase family. ProS type 2 subfamily. As to quaternary structure, homodimer.

It is found in the cytoplasm. The enzyme catalyses tRNA(Pro) + L-proline + ATP = L-prolyl-tRNA(Pro) + AMP + diphosphate. Functionally, catalyzes the attachment of proline to tRNA(Pro) in a two-step reaction: proline is first activated by ATP to form Pro-AMP and then transferred to the acceptor end of tRNA(Pro). This is Proline--tRNA ligase from Rhodospirillum rubrum (strain ATCC 11170 / ATH 1.1.1 / DSM 467 / LMG 4362 / NCIMB 8255 / S1).